Consider the following 439-residue polypeptide: Paraneoplastic antigen-like protein 8A (439 aa).

Positions 213 to 439 are disordered; it reads ETPNNWNATE…RRATNESRKV (227 aa). Over residues 231–249 the composition is skewed to basic residues; that stretch reads LVRRAGAKSRSRRKKQKKN. Over residues 403–419 the composition is skewed to polar residues; sequence KAPQGQQPAEATASTSR. Residues 423–439 are compositionally biased toward basic and acidic residues; the sequence is AKPEGSPRRATNESRKV.

Belongs to the PNMA family.

In Pongo abelii (Sumatran orangutan), this protein is Paraneoplastic antigen-like protein 8A (PNMA8A).